Consider the following 393-residue polypeptide: MALNFNSPTFQSIKTTRRPCSPLRSPRVFMASTLRPPSVEDGNVKKPFSPPREVHVQVTHSMPPEKREIFDSLHGWADNNILVHLKPVEKCWQASDFLPDPASEGFEDQVKELRERCKEIPDDYFVVLVGDMITEEALPTYQTMLNTLDGVRDETGASLTPWAIWTRAWTAEENRHGDLLNKYLYLSGRVDMRQIEKTIQYLIGSGMDPRTENNPYLGFIYTSFQERATFISHGNTARHAKEHGDMKLAQVCGIIAADEKRHETAYTKIVEKLFEVDPDGTVLAVADMMRKKISMPAHLMYDGRDDNLFEHFSTVAQRLGVYTAKDYADILEFLVGRWEIEKLTGLSGEGHKARDYVCGLAPRIRKLEERAQARAKQKAPVPFSWVFGKDIKL.

The transit peptide at 1–30 (MALNFNSPTFQSIKTTRRPCSPLRSPRVFM) directs the protein to the chloroplast. Fe cation is bound by residues Glu135, Glu173, His176, Glu226, Glu259, and His262.

Belongs to the fatty acid desaturase type 2 family. In terms of assembly, homodimer. It depends on Fe(2+) as a cofactor.

The protein resides in the plastid. Its subcellular location is the chloroplast. It catalyses the reaction octadecanoyl-[ACP] + 2 reduced [2Fe-2S]-[ferredoxin] + O2 + 2 H(+) = (9Z)-octadecenoyl-[ACP] + 2 oxidized [2Fe-2S]-[ferredoxin] + 2 H2O. It functions in the pathway lipid metabolism; fatty acid metabolism. Functionally, converts stearoyl-ACP to oleoyl-ACP by introduction of a cis double bond between carbons 9 and 10 of the acyl chain. The sequence is that of Stearoyl-[acyl-carrier-protein] 9-desaturase, chloroplastic from Solanum commersonii (Commerson's wild potato).